The chain runs to 844 residues: Probable serine/threonine-protein kinase DDB_G0267566 (844 aa).

2 ANK repeats span residues 335 to 367 (KGDT…NANI) and 371 to 400 (KHKV…KPFL). One can recognise a Protein kinase domain in the interval 508 to 773 (SELGKLIGKG…FEVFQKLKKV (266 aa)). ATP contacts are provided by residues 514–522 (IGKGANGKV) and K539. D634 (proton acceptor) is an active-site residue.

It belongs to the protein kinase superfamily. Ser/Thr protein kinase family.

It carries out the reaction L-seryl-[protein] + ATP = O-phospho-L-seryl-[protein] + ADP + H(+). It catalyses the reaction L-threonyl-[protein] + ATP = O-phospho-L-threonyl-[protein] + ADP + H(+). This is Probable serine/threonine-protein kinase DDB_G0267566 from Dictyostelium discoideum (Social amoeba).